The chain runs to 434 residues: Enolase 2 (434 aa).

(2R)-2-phosphoglycerate is bound at residue glutamine 171. Catalysis depends on glutamate 213, which acts as the Proton donor. Residues aspartate 250, glutamate 293, and aspartate 320 each coordinate Mg(2+). 4 residues coordinate (2R)-2-phosphoglycerate: lysine 345, arginine 374, serine 375, and lysine 396. The Proton acceptor role is filled by lysine 345.

The protein belongs to the enolase family. It depends on Mg(2+) as a cofactor.

The protein localises to the cytoplasm. It localises to the secreted. Its subcellular location is the cell surface. It carries out the reaction (2R)-2-phosphoglycerate = phosphoenolpyruvate + H2O. Its pathway is carbohydrate degradation; glycolysis; pyruvate from D-glyceraldehyde 3-phosphate: step 4/5. Its function is as follows. Catalyzes the reversible conversion of 2-phosphoglycerate (2-PG) into phosphoenolpyruvate (PEP). It is essential for the degradation of carbohydrates via glycolysis. This is Enolase 2 from Streptomyces coelicolor (strain ATCC BAA-471 / A3(2) / M145).